We begin with the raw amino-acid sequence, 443 residues long: Xaa-Pro dipeptidase (443 aa).

The Mn(2+) site is built by aspartate 246, aspartate 257, histidine 339, glutamate 384, and glutamate 423.

Belongs to the peptidase M24B family. Bacterial-type prolidase subfamily. The cofactor is Mn(2+).

The enzyme catalyses Xaa-L-Pro dipeptide + H2O = an L-alpha-amino acid + L-proline. In terms of biological role, splits dipeptides with a prolyl residue in the C-terminal position. This Salmonella arizonae (strain ATCC BAA-731 / CDC346-86 / RSK2980) protein is Xaa-Pro dipeptidase.